A 374-amino-acid polypeptide reads, in one-letter code: Anthranilate O-methyltransferase 2 (374 aa).

S-adenosyl-L-homocysteine is bound at residue Tyr18. Gln25 contributes to the anthranilate binding site. S-adenosyl-L-homocysteine contacts are provided by Cys59, Asn64, Asp98, Leu99, Ser142, and Tyr143. Anthranilate is bound at residue Trp164. Glu261 and Phe263 together coordinate Mg(2+).

The protein belongs to the methyltransferase superfamily. Type-7 methyltransferase family. SABATH subfamily.

It catalyses the reaction anthranilate + S-adenosyl-L-methionine = O-methyl anthranilate + S-adenosyl-L-homocysteine. Methyltransferase involved in the biosynthesis of methyl anthranilate in response to stresses. Utilizes anthranilic acid as substrate. Produces exclusively the O-methyl ester. The protein is Anthranilate O-methyltransferase 2 (AAMT2) of Zea mays (Maize).